The sequence spans 610 residues: Propanediol dehydratase-reactivating factor large subunit (610 aa).

N11–S13 contributes to the ATP binding site. Mg(2+) contacts are provided by T105, D166, and D183. Residues E459–K462, G557–S558, and R591 each bind ATP.

Belongs to the DdrA/PduG family. As to quaternary structure, forms a heterotetramer PduG(2)/PduH(2). Mg(2+) is required as a cofactor.

The protein resides in the bacterial microcompartment. The enzyme catalyses ATP + H2O = ADP + phosphate + H(+). It functions in the pathway polyol metabolism; 1,2-propanediol degradation. In terms of biological role, large subunit of the propanediol dehydratase-reactivating factor (DDR), which reactivates suicidally inhibited adenosylcobalamin-dependent propanediol dehydratase (diol dehydratase, DDH) found in the bacterial microcompartment (BMC) dedicated to 1,2-propanediol (1,2-PD) degradation. Reactivates inactivated DDH in the presence of ATP, Mg(2+) and free adenosylcobalamin (AdoCbl), by mediating the exchange of the tightly bound damaged cofactor AdoCbl for a free intact one. This subunit contains the adenosine nucleotide binding site. Its function is as follows. The 1,2-PD-specific bacterial microcompartment (BMC) concentrates low levels of 1,2-PD catabolic enzymes, concentrates volatile reaction intermediates thus enhancing pathway flux and keeps the level of toxic, mutagenic propionaldehyde low. The polypeptide is Propanediol dehydratase-reactivating factor large subunit (Salmonella typhimurium (strain LT2 / SGSC1412 / ATCC 700720)).